The following is a 478-amino-acid chain: Capsid vertex component 1 (478 aa).

Residues 131 to 184 form a disordered region; the sequence is PRGPESEGEGGKDGGAGRGDGEASRESPLERIAAEASGPGPGSGRGRSAGGRRA. The segment covering 149–163 has biased composition (basic and acidic residues); sequence GDGEASRESPLERIA. Over residues 169-179 the composition is skewed to gly residues; that stretch reads PGPGSGRGRSA.

The protein belongs to the herpesviridae CVC1 protein family. As to quaternary structure, interacts (via C-terminus) with capsid vertex component 2/CVC2.

The protein localises to the virion. It localises to the host nucleus. In terms of biological role, capsid vertex-specific component that plays a role during viral DNA encapsidation, assuring correct genome cleavage and presumably stabilizing capsids that contain full-length viral genomes. The chain is Capsid vertex component 1 from Equus caballus (Horse).